The chain runs to 394 residues: HORMA domain-containing protein 1 (394 aa).

The HORMA domain occupies 24-226 (QQSLVLVKRL…TPFHTFKVKV (203 aa)). The interval 306–394 (KESPELSISH…RKFSEPKEHI (89 aa)) is disordered. Polar residues predominate over residues 311–325 (LSISHSQVEQLVSKT). Over residues 353 to 362 (KSKESRKRSQ) the composition is skewed to basic and acidic residues. The residue at position 376 (Ser376) is a Phosphoserine. Residues 383-386 (KRRK) carry the Nuclear localization signal motif.

In terms of assembly, interacts with HORMAD2. Interacts with IHO1. Phosphorylated at Ser-377 in a SPO11-dependent manner.

Its subcellular location is the nucleus. It is found in the chromosome. Plays a key role in meiotic progression. Regulates 3 different functions during meiosis: ensures that sufficient numbers of processed DNA double-strand breaks (DSBs) are available for successful homology search by increasing the steady-state numbers of single-stranded DSB ends. Promotes synaptonemal-complex formation independently of its role in homology search. Plays a key role in the male mid-pachytene checkpoint and the female meiotic prophase checkpoint: required for efficient build-up of ATR activity on unsynapsed chromosome regions, a process believed to form the basis of meiotic silencing of unsynapsed chromatin (MSUC) and meiotic prophase quality control in both sexes. This is HORMA domain-containing protein 1 (HORMAD1) from Sus scrofa (Pig).